Reading from the N-terminus, the 368-residue chain is Repressor ROX1 (368 aa).

The HMG box DNA-binding region spans 10 to 83 (IPRPKNAFIL…EHERKYPEYK (74 aa)). Disordered stretches follow at residues 100 to 121 (IEQQ…QPQL) and 242 to 273 (SSQT…SSVL). The span at 102-121 (QQQQQQQKEQQQQKQSQPQL) shows a compositional bias: low complexity.

The protein localises to the nucleus. In terms of biological role, transcription factor that represses the expression of HEM13, COX5B, ANB1, CYC7 or AAC3 (hypoxic function). Binds to the DNA sequence 5'-RRRTAACAAGAG-3'. This chain is Repressor ROX1 (ROX1), found in Saccharomyces cerevisiae (strain ATCC 204508 / S288c) (Baker's yeast).